Here is a 411-residue protein sequence, read N- to C-terminus: Glutamate dehydrogenase (411 aa).

Lysine 102 is a catalytic residue.

It belongs to the Glu/Leu/Phe/Val dehydrogenases family.

It catalyses the reaction L-glutamate + NAD(+) + H2O = 2-oxoglutarate + NH4(+) + NADH + H(+). The catalysed reaction is L-glutamate + NADP(+) + H2O = 2-oxoglutarate + NH4(+) + NADPH + H(+). The chain is Glutamate dehydrogenase (GDH1) from Zea mays (Maize).